We begin with the raw amino-acid sequence, 382 residues long: tRNA (guanine(37)-N(1))-methyltransferase (382 aa).

S-adenosyl-L-methionine-binding positions include histidine 205, 243-244 (DL), 269-270 (DA), and asparagine 291.

Belongs to the class I-like SAM-binding methyltransferase superfamily. TRM5/TYW2 family. As to quaternary structure, monomer.

Its subcellular location is the mitochondrion matrix. The protein resides in the nucleus. It is found in the cytoplasm. It catalyses the reaction guanosine(37) in tRNA + S-adenosyl-L-methionine = N(1)-methylguanosine(37) in tRNA + S-adenosyl-L-homocysteine + H(+). Its function is as follows. Specifically methylates the N1 position of guanosine-37 in various cytoplasmic and mitochondrial tRNAs. Methylation is not dependent on the nature of the nucleoside 5' of the target nucleoside. This is the first step in the biosynthesis of wybutosine (yW), a modified base adjacent to the anticodon of tRNAs and required for accurate decoding. The sequence is that of tRNA (guanine(37)-N(1))-methyltransferase from Entamoeba histolytica (strain ATCC 30459 / HM-1:IMSS / ABRM).